Consider the following 160-residue polypeptide: Putative pre-16S rRNA nuclease (160 aa).

This sequence belongs to the YqgF nuclease family.

The protein localises to the cytoplasm. In terms of biological role, could be a nuclease involved in processing of the 5'-end of pre-16S rRNA. The protein is Putative pre-16S rRNA nuclease of Cereibacter sphaeroides (strain ATCC 17029 / ATH 2.4.9) (Rhodobacter sphaeroides).